Here is a 603-residue protein sequence, read N- to C-terminus: Aquaporin-2 (603 aa).

Residues 40 to 70 traverse the membrane as a helical segment; the sequence is SLKKYKYNLFFEFIGSFLFVFFISIYMLNSN. 2 stretches are compositionally biased toward basic and acidic residues: residues 135-149 and 156-190; these read NNKS…DDKI and EFEK…EDPK. Residues 135–200 form a disordered region; sequence NNKSKREVER…NISNKNENYD (66 aa). Residues 191–200 are compositionally biased toward polar residues; it reads NISNKNENYD. 5 helical membrane passes run 282–299, 321–346, 360–393, 442–471, and 509–542; these read HAIY…FILL, FALS…AHLY, IIKT…EENK, NKYI…VTNT, and ITKI…FLSL.

The protein belongs to the MIP/aquaporin (TC 1.A.8) family.

It is found in the endomembrane system. The catalysed reaction is H2O(in) = H2O(out). It carries out the reaction glycerol(in) = glycerol(out). In terms of biological role, required for sporozoite development in the mosquito vector. The chain is Aquaporin-2 from Plasmodium falciparum (isolate NF54).